A 139-amino-acid polypeptide reads, in one-letter code: Putative pre-16S rRNA nuclease (139 aa).

This sequence belongs to the YqgF nuclease family.

The protein localises to the cytoplasm. Could be a nuclease involved in processing of the 5'-end of pre-16S rRNA. The sequence is that of Putative pre-16S rRNA nuclease from Pectobacterium atrosepticum (strain SCRI 1043 / ATCC BAA-672) (Erwinia carotovora subsp. atroseptica).